A 739-amino-acid polypeptide reads, in one-letter code: Cellulose synthase catalytic subunit [UDP-forming] (739 aa).

A run of 4 helical transmembrane segments spans residues 36–55, 59–76, 83–101, and 116–138; these read VLVV…IISA, LYSQ…VLVL, LAIL…RYMF, and MFFG…FGYV. Positions 157–250 are catalytic subdomain A; the sequence is EWPTVDVFIP…YIALFDADHV (94 aa). Aspartate 199 is an active-site residue. 2 residues coordinate substrate: aspartate 246 and aspartate 248. Positions 327-387 are catalytic subdomain B; sequence EPLLEIGGVA…NQRIRWARGM (61 aa). Aspartate 343 is a catalytic residue. Helical transmembrane passes span 417 to 436, 440 to 462, 524 to 546, and 551 to 573; these read FFYG…YLIF, IFHA…SSLT, PYLV…LIWG, and AVTV…AAVA. The PilZ domain maps to 580–677; sequence QVRSEPRVSA…QSELVRLTFS (98 aa).

This sequence belongs to the glycosyltransferase 2 family. Requires Mg(2+) as cofactor.

It localises to the cell inner membrane. The enzyme catalyses [(1-&gt;4)-beta-D-glucosyl](n) + UDP-alpha-D-glucose = [(1-&gt;4)-beta-D-glucosyl](n+1) + UDP + H(+). Its pathway is glycan metabolism; bacterial cellulose biosynthesis. With respect to regulation, activated by bis-(3'-5') cyclic diguanylic acid (c-di-GMP). Its function is as follows. Catalytic subunit of cellulose synthase. It polymerizes uridine 5'-diphosphate glucose to cellulose, which is produced as an extracellular component responsible for the structural integrity and rigidity of self-supporting mats characteristic of the 'wrinkly spreader' phenotype. In Pseudomonas fluorescens (strain SBW25), this protein is Cellulose synthase catalytic subunit [UDP-forming] (bcsA).